The chain runs to 428 residues: UDP-N-acetylglucosamine 1-carboxyvinyltransferase (428 aa).

Phosphoenolpyruvate is bound at residue 25-26 (KN). Arg-102 contributes to the UDP-N-acetyl-alpha-D-glucosamine binding site. Cys-126 functions as the Proton donor in the catalytic mechanism. At Cys-126 the chain carries 2-(S-cysteinyl)pyruvic acid O-phosphothioketal. Residues Asp-316 and Val-338 each contribute to the UDP-N-acetyl-alpha-D-glucosamine site.

This sequence belongs to the EPSP synthase family. MurA subfamily.

The protein resides in the cytoplasm. The catalysed reaction is phosphoenolpyruvate + UDP-N-acetyl-alpha-D-glucosamine = UDP-N-acetyl-3-O-(1-carboxyvinyl)-alpha-D-glucosamine + phosphate. The protein operates within cell wall biogenesis; peptidoglycan biosynthesis. Its function is as follows. Cell wall formation. Adds enolpyruvyl to UDP-N-acetylglucosamine. The protein is UDP-N-acetylglucosamine 1-carboxyvinyltransferase of Anaplasma marginale (strain Florida).